The sequence spans 358 residues: Alanine racemase (358 aa).

Catalysis depends on Lys-35, which acts as the Proton acceptor; specific for D-alanine. Lys-35 bears the N6-(pyridoxal phosphate)lysine mark. Arg-131 provides a ligand contact to substrate. The Proton acceptor; specific for L-alanine role is filled by Tyr-253. Residue Met-301 coordinates substrate.

This sequence belongs to the alanine racemase family. The cofactor is pyridoxal 5'-phosphate.

It carries out the reaction L-alanine = D-alanine. It participates in amino-acid biosynthesis; D-alanine biosynthesis; D-alanine from L-alanine: step 1/1. Catalyzes the interconversion of L-alanine and D-alanine. May also act on other amino acids. This Alteromonas mediterranea (strain DSM 17117 / CIP 110805 / LMG 28347 / Deep ecotype) protein is Alanine racemase (alr).